The following is a 103-amino-acid chain: Large ribosomal subunit protein bL21 (103 aa).

This sequence belongs to the bacterial ribosomal protein bL21 family. In terms of assembly, part of the 50S ribosomal subunit. Contacts protein L20.

Its function is as follows. This protein binds to 23S rRNA in the presence of protein L20. This chain is Large ribosomal subunit protein bL21, found in Photobacterium profundum (strain SS9).